The following is a 263-amino-acid chain: L-aspartate dehydrogenase (263 aa).

The NAD(+) site is built by A120 and N186. The active site involves H216.

Belongs to the L-aspartate dehydrogenase family.

The enzyme catalyses L-aspartate + NADP(+) + H2O = oxaloacetate + NH4(+) + NADPH + H(+). It carries out the reaction L-aspartate + NAD(+) + H2O = oxaloacetate + NH4(+) + NADH + H(+). The protein operates within cofactor biosynthesis; NAD(+) biosynthesis; iminoaspartate from L-aspartate (dehydrogenase route): step 1/1. In terms of biological role, specifically catalyzes the NAD or NADP-dependent dehydrogenation of L-aspartate to iminoaspartate. This chain is L-aspartate dehydrogenase, found in Psychrobacter cryohalolentis (strain ATCC BAA-1226 / DSM 17306 / VKM B-2378 / K5).